The chain runs to 147 residues: UPF0178 protein Patl_1318 (147 aa).

This sequence belongs to the UPF0178 family.

In Pseudoalteromonas atlantica (strain T6c / ATCC BAA-1087), this protein is UPF0178 protein Patl_1318.